The chain runs to 348 residues: Phenylalanine--tRNA ligase alpha subunit (348 aa).

Glu268 provides a ligand contact to Mg(2+).

The protein belongs to the class-II aminoacyl-tRNA synthetase family. Phe-tRNA synthetase alpha subunit type 1 subfamily. As to quaternary structure, tetramer of two alpha and two beta subunits. The cofactor is Mg(2+).

It localises to the cytoplasm. It catalyses the reaction tRNA(Phe) + L-phenylalanine + ATP = L-phenylalanyl-tRNA(Phe) + AMP + diphosphate + H(+). The polypeptide is Phenylalanine--tRNA ligase alpha subunit (Bordetella parapertussis (strain 12822 / ATCC BAA-587 / NCTC 13253)).